The sequence spans 82 residues: Beta-defensin 119 (82 aa).

A signal peptide spans 1–19; sequence MKFFLFFVILLAMEPVISG. Disulfide bonds link Cys26–Cys53, Cys33–Cys47, and Cys37–Cys54.

The protein belongs to the beta-defensin family.

It is found in the secreted. In terms of biological role, has antibacterial activity. The chain is Beta-defensin 119 (DEFB119) from Canis lupus familiaris (Dog).